The chain runs to 234 residues: RNA-binding protein pno1 (234 aa).

The interval 1–39 is disordered; it reads MPTQDSAAKQADDGFQLVQKKSRKRKMTMDMDDADPKAG. The region spanning 158-207 is the KH domain; the sequence is LARCIGRLAGKGGRTKFTIENVTKTRIVLADSKVHILGSYQNIRAARTAL.

It belongs to the PNO1 family.

The protein localises to the nucleus. The protein resides in the nucleolus. The chain is RNA-binding protein pno1 from Ixodes scapularis (Black-legged tick).